The primary structure comprises 936 residues: Intimin (936 aa).

The N-terminal stretch at 1 to 41 (MIIHGFCTGTRHKHKLRKTFIMLGAGLGLFFSVNQNSFANG) is a signal peptide. Residues 63–112 (LFYTLKTGESVAQLSKSQGISVPVIWSLNKHLYSSESEMMKASPGQQIIL) enclose the LysM domain. Big-1 domains follow at residues 557–650 (ITNF…VIFV) and 657–748 (ITEI…VEFF). The BIG2 domain occupies 780–831 (KLQATGGNGKYTWKSSNTKIASVDNSGVITLNEKGSATITVVSGDNQSATYT). Cys-857 and Cys-934 are joined by a disulfide.

This sequence belongs to the intimin/invasin family.

The protein localises to the cell outer membrane. Functionally, an inverse autotransporter. This chain is Intimin (eae), found in Citrobacter freundii.